The sequence spans 400 residues: MTQFASPVLHSLLDTDAYKLHMQQAVFHHYYDVHVAAEFRCRGDDLLGIYADAIREQVQAMQHLRLQDDEYQWLSALPFFQADYLNWLREFRFNPEQVTVSNDNGKLDIRLSGPWREVILWEVPLLAVISEMVHRYRSPQTDVAQALDTLESKLVDFSALTAGLDMSRFHLMDFGTRRRFSREVQETIVKRLQQESWFVGTSNYDLARRLSLTPMGTQAHEWFQAHQQISPDLANSQRAALAAWLEEYPDQLGIALTDCITMDAFLRDFGVEFASRYQGLRHDSGDPVEWGEKAIAHYEKLGIDPQSKTLVFSDNLDLRKAVELYRHFSSRVQLSFGIGTRLTCDIPQVKPLNIVIKLVECNGKPVAKLSDSPGKTICHDKAFVRALRKAFDLPHIKKAS.

H220 is modified (phosphohistidine; by autocatalysis).

This sequence belongs to the NAPRTase family. Transiently phosphorylated on a His residue during the reaction cycle. Phosphorylation strongly increases the affinity for substrates and increases the rate of nicotinate D-ribonucleotide production. Dephosphorylation regenerates the low-affinity form of the enzyme, leading to product release.

It carries out the reaction nicotinate + 5-phospho-alpha-D-ribose 1-diphosphate + ATP + H2O = nicotinate beta-D-ribonucleotide + ADP + phosphate + diphosphate. It participates in cofactor biosynthesis; NAD(+) biosynthesis; nicotinate D-ribonucleotide from nicotinate: step 1/1. Functionally, catalyzes the synthesis of beta-nicotinate D-ribonucleotide from nicotinate and 5-phospho-D-ribose 1-phosphate at the expense of ATP. This chain is Nicotinate phosphoribosyltransferase, found in Escherichia coli O7:K1 (strain IAI39 / ExPEC).